Here is an 80-residue protein sequence, read N- to C-terminus: Cytochrome c oxidase subunit 7A1, mitochondrial (80 aa).

The transit peptide at 1 to 21 (MRALRVSQALVRSFSSTARNR) directs the protein to the mitochondrion. Over 22–46 (LENRVAEKQKIFQADNDLPVHLKGG) the chain is Mitochondrial matrix. The chain crosses the membrane as a helical span at residues 47 to 75 (ATDNILYRVTMTLCLGGTVYSLYCLGWAS). The Mitochondrial intermembrane portion of the chain corresponds to 76–80 (FPHKK).

The protein belongs to the cytochrome c oxidase VIIa family. In terms of assembly, component of the complex IV (CIV, cytochrome c oxidase), a multisubunit enzyme composed of 14 subunits. The complex is composed of a catalytic core of 3 subunits MT-CO1, MT-CO2 and MT-CO3, encoded in the mitochondrial DNA, and 11 supernumerary subunits COX4I1 (or COX4I2), COX5A, COX5B, COX6A2 (or COX6A1), COX6B1 (or COX6B2), COX6C, COX7A1 (or COX7A2), COX7B, COX7C, COX8B and NDUFA4, which are encoded in the nuclear genome. The complex exists as a monomer or a dimer and forms supercomplexes (SCs) in the inner mitochondrial membrane with NADH-ubiquinone oxidoreductase (complex I, CI) and ubiquinol-cytochrome c oxidoreductase (cytochrome b-c1 complex, complex III, CIII), resulting in different assemblies (supercomplex SCI(1)III(2)IV(1) and megacomplex MCI(2)III(2)IV(2)).

It is found in the mitochondrion inner membrane. The protein operates within energy metabolism; oxidative phosphorylation. Its function is as follows. Component of the mitochondrial respiratory complex IV (CIV, also named cytochrome c oxidase complex), the last enzyme in the mitochondrial electron transport chain which drives oxidative phosphorylation. The CIV complex is the component of the respiratory chain that catalyzes the reduction of oxygen to water. Acts as an assembly factor that specifically drives the homodimerization of CIV complexes, mediating the formation of mitochondrial respiratory supercomplexes (respirasomes) containing two CIV: supercomplxes with two molecules of CIV show improved activity. Despite being highly expressed in brown adipose tissue, not required for thermogenesis. The protein is Cytochrome c oxidase subunit 7A1, mitochondrial (COX7A1) of Sus scrofa (Pig).